The following is a 408-amino-acid chain: LL-diaminopimelate aminotransferase (408 aa).

Substrate contacts are provided by Y15 and G42. Pyridoxal 5'-phosphate-binding positions include Y72, 108-109 (SK), Y132, N187, Y218, and 246-248 (SFS). Substrate is bound by residues K109, Y132, and N187. Residue K249 is modified to N6-(pyridoxal phosphate)lysine. 2 residues coordinate pyridoxal 5'-phosphate: R257 and N292. Substrate contacts are provided by N292 and R388.

It belongs to the class-I pyridoxal-phosphate-dependent aminotransferase family. LL-diaminopimelate aminotransferase subfamily. In terms of assembly, homodimer. The cofactor is pyridoxal 5'-phosphate.

It carries out the reaction (2S,6S)-2,6-diaminopimelate + 2-oxoglutarate = (S)-2,3,4,5-tetrahydrodipicolinate + L-glutamate + H2O + H(+). It participates in amino-acid biosynthesis; L-lysine biosynthesis via DAP pathway; LL-2,6-diaminopimelate from (S)-tetrahydrodipicolinate (aminotransferase route): step 1/1. Involved in the synthesis of meso-diaminopimelate (m-DAP or DL-DAP), required for both lysine and peptidoglycan biosynthesis. Catalyzes the direct conversion of tetrahydrodipicolinate to LL-diaminopimelate. In Leptospira interrogans serogroup Icterohaemorrhagiae serovar Lai (strain 56601), this protein is LL-diaminopimelate aminotransferase.